The sequence spans 88 residues: Conotoxin VxVIB (88 aa).

An N-terminal signal peptide occupies residues 1 to 22 (MNLACVLIVAVLFLTASQLATA). The propeptide occupies 23–52 (ASYARDKQEYPAVRSSDEMQDSEDLTLTKE). 3 disulfide bridges follow: C53/C68, C60/C72, and C67/C81.

Expressed by the venom duct.

It localises to the secreted. Its function is as follows. May act as a neurotoxin, but produces no obvious effect on ionic currents when tested on the mouse dorsal rooted ganglia (DRG). The sequence is that of Conotoxin VxVIB from Conus vexillum (Flag cone).